The chain runs to 33 residues: Glutaminase-asparaginase (33 aa).

An Asparaginase/glutaminase domain is found at 1–33 (NVVVLATGGTIAGAGTNAFASQXGPLGMVVEGK). Catalysis depends on threonine 10, which acts as the Acyl-ester intermediate.

Belongs to the asparaginase 1 family. As to quaternary structure, homotetramer.

The protein localises to the periplasm. The enzyme catalyses L-glutamine + H2O = L-glutamate + NH4(+). It catalyses the reaction L-asparagine + H2O = L-aspartate + NH4(+). This Delftia acidovorans (Pseudomonas acidovorans) protein is Glutaminase-asparaginase (ansB).